The primary structure comprises 228 residues: Cytochrome c oxidase subunit 2 (228 aa).

Topologically, residues 1–26 are mitochondrial intermembrane; that stretch reads MATWNNLNLQNGASPLMEQIIFFHDH. The helical transmembrane segment at 27–48 threads the bilayer; the sequence is TLIILIMITILVGYLMINLFFN. Residues 49–62 lie on the Mitochondrial matrix side of the membrane; the sequence is KYINRFLLEGQMIE. A helical membrane pass occupies residues 63 to 82; the sequence is LIWTILPAITLIFIALPSLR. Residues 83-228 are Mitochondrial intermembrane-facing; it reads LLYLLDELNN…FIKWINNYSS (146 aa). His-161, Cys-196, Glu-198, Cys-200, His-204, and Met-207 together coordinate Cu cation. Glu-198 lines the Mg(2+) pocket.

It belongs to the cytochrome c oxidase subunit 2 family. Component of the cytochrome c oxidase (complex IV, CIV), a multisubunit enzyme composed of a catalytic core of 3 subunits and several supernumerary subunits. The complex exists as a monomer or a dimer and forms supercomplexes (SCs) in the inner mitochondrial membrane with ubiquinol-cytochrome c oxidoreductase (cytochrome b-c1 complex, complex III, CIII). Cu cation is required as a cofactor.

The protein localises to the mitochondrion inner membrane. It catalyses the reaction 4 Fe(II)-[cytochrome c] + O2 + 8 H(+)(in) = 4 Fe(III)-[cytochrome c] + 2 H2O + 4 H(+)(out). In terms of biological role, component of the cytochrome c oxidase, the last enzyme in the mitochondrial electron transport chain which drives oxidative phosphorylation. The respiratory chain contains 3 multisubunit complexes succinate dehydrogenase (complex II, CII), ubiquinol-cytochrome c oxidoreductase (cytochrome b-c1 complex, complex III, CIII) and cytochrome c oxidase (complex IV, CIV), that cooperate to transfer electrons derived from NADH and succinate to molecular oxygen, creating an electrochemical gradient over the inner membrane that drives transmembrane transport and the ATP synthase. Cytochrome c oxidase is the component of the respiratory chain that catalyzes the reduction of oxygen to water. Electrons originating from reduced cytochrome c in the intermembrane space (IMS) are transferred via the dinuclear copper A center (CU(A)) of subunit 2 and heme A of subunit 1 to the active site in subunit 1, a binuclear center (BNC) formed by heme A3 and copper B (CU(B)). The BNC reduces molecular oxygen to 2 water molecules using 4 electrons from cytochrome c in the IMS and 4 protons from the mitochondrial matrix. This is Cytochrome c oxidase subunit 2 (COII) from Yponomeuta malinellus (European small ermine moth).